A 311-amino-acid polypeptide reads, in one-letter code: Formimidoylglutamase (311 aa).

Mn(2+)-binding residues include H127, D152, H154, D156, C236, and D238.

Belongs to the arginase family. The cofactor is Mn(2+).

It catalyses the reaction N-formimidoyl-L-glutamate + H2O = formamide + L-glutamate. It participates in amino-acid degradation; L-histidine degradation into L-glutamate; L-glutamate from N-formimidoyl-L-glutamate (hydrolase route): step 1/1. Its function is as follows. Catalyzes the conversion of N-formimidoyl-L-glutamate to L-glutamate and formamide. The chain is Formimidoylglutamase from Macrococcus caseolyticus (strain JCSC5402) (Macrococcoides caseolyticum).